The primary structure comprises 471 residues: Trigger factor (471 aa).

The 88-residue stretch at 174–261 folds into the PPIase FKBP-type domain; the sequence is GDVAVVSFEG…VKDLKTRELP (88 aa). The segment covering 436–446 has biased composition (polar residues); that stretch reads ETLPKTKSLNG. The tract at residues 436–471 is disordered; that stretch reads ETLPKTKSLNGKPSTQGKTSQSKSKKTKTKVEKTTK. Positions 447–457 are enriched in low complexity; the sequence is KPSTQGKTSQS.

The protein belongs to the FKBP-type PPIase family. Tig subfamily.

It is found in the cytoplasm. The enzyme catalyses [protein]-peptidylproline (omega=180) = [protein]-peptidylproline (omega=0). Its function is as follows. Involved in protein export. Acts as a chaperone by maintaining the newly synthesized protein in an open conformation. Functions as a peptidyl-prolyl cis-trans isomerase. This Prochlorococcus marinus (strain MIT 9211) protein is Trigger factor.